Here is a 260-residue protein sequence, read N- to C-terminus: Ribose-5-phosphate isomerase (260 aa).

This sequence belongs to the ribose 5-phosphate isomerase family.

It is found in the cytoplasm. It carries out the reaction aldehydo-D-ribose 5-phosphate = D-ribulose 5-phosphate. It functions in the pathway carbohydrate degradation; pentose phosphate pathway; D-ribose 5-phosphate from D-ribulose 5-phosphate (non-oxidative stage): step 1/1. In Candida glabrata (strain ATCC 2001 / BCRC 20586 / JCM 3761 / NBRC 0622 / NRRL Y-65 / CBS 138) (Yeast), this protein is Ribose-5-phosphate isomerase (RKI1).